A 294-amino-acid polypeptide reads, in one-letter code: Pantothenate synthetase 3 (294 aa).

31-38 lines the ATP pocket; it reads MGALHEGH. Histidine 38 functions as the Proton donor in the catalytic mechanism. Glutamine 62 lines the (R)-pantoate pocket. Glutamine 62 lines the beta-alanine pocket. 154-157 lines the ATP pocket; the sequence is GEKD. Glutamine 160 is a (R)-pantoate binding site. ATP is bound at residue 191-194; it reads LSSR.

It belongs to the pantothenate synthetase family. Homodimer.

The protein resides in the cytoplasm. The enzyme catalyses (R)-pantoate + beta-alanine + ATP = (R)-pantothenate + AMP + diphosphate + H(+). It participates in cofactor biosynthesis; (R)-pantothenate biosynthesis; (R)-pantothenate from (R)-pantoate and beta-alanine: step 1/1. In terms of biological role, catalyzes the condensation of pantoate with beta-alanine in an ATP-dependent reaction via a pantoyl-adenylate intermediate. The polypeptide is Pantothenate synthetase 3 (Frankia alni (strain DSM 45986 / CECT 9034 / ACN14a)).